We begin with the raw amino-acid sequence, 224 residues long: RNA-binding protein 24-B (224 aa).

One can recognise an RRM domain in the interval 11–88 (TKIFVGGLPY…RKANVNLAYL (78 aa)).

Its subcellular location is the nucleus. The protein resides in the cytoplasm. Multifunctional RNA-binding protein involved in the regulation of pre-mRNA splicing, mRNA stability and mRNA translation important for cell fate decision and differentiation. Plays a major role in pre-mRNA alternative splicing regulation. Mediates preferentially muscle-specific exon inclusion in numerous mRNAs important for striated cardiac and skeletal muscle cell differentiation. Binds to intronic splicing enhancer (ISE) composed of stretches of GU-rich motifs localized in flanking intron of exon that will be included by alternative splicing. Involved in embryonic stem cell (ESC) transition to cardiac cell differentiation by promoting pre-mRNA alternative splicing events of several pluripotency and/or differentiation genes. Plays a role in the regulation of mRNA stability and mRNA translation to which it is bound. Involved in myogenic differentiation by regulating myog levels. Binds to a huge amount of mRNAs. Required for embryonic heart development, sarcomer and M-band formation in striated muscles. This Xenopus laevis (African clawed frog) protein is RNA-binding protein 24-B (rbm24-b).